A 134-amino-acid polypeptide reads, in one-letter code: Probable glycine cleavage system H protein (134 aa).

A Lipoyl-binding domain is found at 29 to 110; the sequence is TVLVGITDYA…PYEAWIAKIK (82 aa). Lys70 bears the N6-lipoyllysine mark.

This sequence belongs to the GcvH family. The glycine cleavage system is composed of four proteins: P, T, L and H. (R)-lipoate serves as cofactor.

Its function is as follows. The glycine cleavage system catalyzes the degradation of glycine. The H protein shuttles the methylamine group of glycine from the P protein to the T protein. This chain is Probable glycine cleavage system H protein, found in Pyrococcus furiosus (strain ATCC 43587 / DSM 3638 / JCM 8422 / Vc1).